Reading from the N-terminus, the 112-residue chain is MKLVTVIIKPFKLEDVREALSSIGIQGLTVTEVKGFGRQKGHAELYRGAEYSVNFLPKVKIDVAIADDQLDEVIDIVSKAAYTGKIGDGKIFVAELQRVIRIRTGEADEAAL.

ADP is bound at residue Thr29. Position 37 (Gly37) interacts with ATP. Position 38 to 39 (38 to 39 (RQ)) interacts with ADP. Tyr51 carries the O-UMP-tyrosine modification. Residues Ala64, 87-90 (GDGK), and 101-103 (RIR) each bind ADP. ATP-binding positions include Ala64, 87–90 (GDGK), and 101–103 (RIR).

It belongs to the P(II) protein family. As to quaternary structure, homotrimer. In response to elevation of the extracellular ammonium concentration, interacts and forms a complex with AmtB. Post-translationally, uridylylated/deuridylylated by GlnD. Fully uridylylated in nitrogen-limited conditions and deuridylylated when extracellular ammonium increases.

The protein localises to the cytoplasm. Its subcellular location is the cell inner membrane. Its activity is regulated as follows. Formation of the GlnK-AmtB complex is influenced by intracellular pools of the effector molecules ATP, ADP, Mg(2+) and 2-oxoglutarate. The GlnK-AmtB interaction is also controlled by the level of intracellular glutamine and the uridylylation status of GlnK. In terms of biological role, involved in the regulation of nitrogen metabolism. Regulates the activity of its targets by protein-protein interaction in response to the nitrogen status of the cell. Involved in the regulation of the ammonium transporter AmtB so as to optimize ammonium uptake under all growth conditions. In nitrogen-limited conditions, GlnK does not interact with AmtB, which remains active and imports ammonium. When extracellular ammonium increases, GlnK associates tightly with AmtB in the inner membrane, thereby inhibiting the transporter activity. The polypeptide is Nitrogen regulatory protein GlnK (glnK) (Escherichia coli O157:H7).